Here is a 617-residue protein sequence, read N- to C-terminus: MREEKSKTNKLAWSKKMVRKWFNIKSKTEEFQADDPSSAGIEVEHRSSFSAEKAPSTIKNTKTEKLSKNWEQQARQRRMNYENPRIIDVQNYSIFVATWNVAGRSPPSDLNLDEWLHSSAPADIYVLGFQEIVPLNAGNVLGAEDNGPAQKWLSLIRKTLNNRPGTSGTSGYHTPSPIPVPMAELDADFSGSTRQKNSTFFHRRSFQTPSSTWNDPSIPQPGLDRRFSVCDRVFFSHRPSDFDPSFRGSSSSHRPSDYSRRPSDYSRRPSDYSRRPSDYSRRPSDSRPSDYSRPSDYYSRPSDYSRPSDFSRSSDDDNGLGDSPSTVLYSPGSAANENGYRIPWNSSQYCLVASKQMVGVFLTIWVKSELREHVKNMKVSCVGRGLMGYLGNKGSISISMLLHQTSFCFVCTHLTSGQKEGDELKRNSDVMEILKKTRFPRVKSSEEEKSPENILQHDRVIWLGDLNYRIALSYRSAKALVEMQNWRALLENDQLRIEQKRGHVFKGWNEGKIYFPPTYKYSRNSDRYSGDDLHPKEKRRTPAWCDRILWFGEGLHQLSYVRGESRFSDHRPVYGIFCAEVESAHNRIKRTTSYSASRVQAEELLPYSRGYTELSFF.

Disordered stretches follow at residues 30–62 (EFQA…KNTK) and 241–330 (DFDP…VLYS). A compositionally biased stretch (low complexity) spans 242–253 (FDPSFRGSSSSH). Basic and acidic residues predominate over residues 254-290 (RPSDYSRRPSDYSRRPSDYSRRPSDYSRRPSDSRPSD). Positions 291–311 (YSRPSDYYSRPSDYSRPSDFS) are enriched in low complexity. 2 catalytic regions span residues 458–473 (DRVI…IALS) and 538–553 (KRRT…WFGE).

It belongs to the inositol polyphosphate 5-phosphatase family. Broadly expressed in emerging organs. Mostly localized in procambium of growing organs. Restricted to vascular differentiating cells of young organs.

The enzyme catalyses a 1,2-diacyl-sn-glycero-3-phospho-(1D-myo-inositol-4,5-bisphosphate) + H2O = a 1,2-diacyl-sn-glycero-3-phospho-(1D-myo-inositol 4-phosphate) + phosphate. It carries out the reaction a 1,2-diacyl-sn-glycero-3-phospho-(1D-myo-inositol-3,4,5-trisphosphate) + H2O = a 1,2-diacyl-sn-glycero-3-phospho-(1D-myo-inositol-3,4-bisphosphate) + phosphate. Its function is as follows. Has phosphatase activity toward PtdIns(4,5)P2 and PtdIns(3,4,5)P3. Required for the patterning of procambium and during the differentiation of vascular tissues. Acts before the acquisition of preprocambial identity. Seems to be also involved in the abscisic acid (ABA) signaling pathway. Acts redundantly with CVL1 for maintaining vascular continuity. Regulates phosphoinositide-dependent VAN3 localization. The polypeptide is Type IV inositol polyphosphate 5-phosphatase 6 (Arabidopsis thaliana (Mouse-ear cress)).